A 615-amino-acid chain; its full sequence is Semenogelin-1 (615 aa).

A signal peptide spans 1–23 (MKPIIFLVLSLLLILEKQAAVMG). Glutamine 24 is subject to Pyrrolidone carboxylic acid. 3 disordered regions span residues 24–118 (QKGG…EHGK), 133–160 (GHAP…SQDS), and 172–585 (GKEQ…HRSY). The span at 34-46 (SESSQFPHGQKGQ) shows a compositional bias: polar residues. Basic and acidic residues predominate over residues 50-80 (ARKDKQHAESKRSVSIEHTYHVDIPDHDQTR). The span at 81–91 (TSKQYDLNAQN) shows a compositional bias: polar residues. A compositionally biased stretch (basic and acidic residues) spans 107-118 (FNHKQEGREHGK). Polar residues-rich tracts occupy residues 138–160 (GTQN…SQDS), 177–196 (SVSG…SPVL), and 209–224 (TQNS…NVNE). 3 N-linked (GlcNAc...) asparagine glycosylation sites follow: asparagine 148, asparagine 184, and asparagine 223. Over residues 241-253 (QEDRLQHGSKDVF) the composition is skewed to basic and acidic residues. Residues 254-265 (SKNQNQTRNPNQ) are compositionally biased toward polar residues. 2 N-linked (GlcNAc...) asparagine glycosylation sites follow: asparagine 258 and asparagine 275. The span at 283-300 (TEERRPNHGEKGIQKDAS) shows a compositional bias: basic and acidic residues. A glycan (N-linked (GlcNAc...) asparagine) is linked at asparagine 306. The span at 308–317 (TEDKMHDKSQ) shows a compositional bias: basic and acidic residues. Asparagine 332 is a glycosylation site (N-linked (GlcNAc...) asparagine). Positions 341–358 (TEERRPNHGEKGIQKDAS) are enriched in basic and acidic residues. N-linked (GlcNAc...) asparagine glycosylation occurs at asparagine 364. Over residues 366-375 (TEDKMHDKSQ) the composition is skewed to basic and acidic residues. The N-linked (GlcNAc...) asparagine glycan is linked to asparagine 390. The span at 399–416 (TEERRPNHGEKGIQKDAS) shows a compositional bias: basic and acidic residues. An N-linked (GlcNAc...) asparagine glycan is attached at asparagine 422. The segment covering 424 to 433 (TEDKMHDKSQ) has biased composition (basic and acidic residues). The N-linked (GlcNAc...) asparagine glycan is linked to asparagine 448. A compositionally biased stretch (basic and acidic residues) spans 457–474 (TEERRPNHGEKGIQKDAS). N-linked (GlcNAc...) asparagine glycosylation is present at asparagine 480. Basic and acidic residues predominate over residues 481–491 (KTEDKMHDKSQ). Asparagine 506 carries an N-linked (GlcNAc...) asparagine glycan. Basic and acidic residues predominate over residues 515–532 (TEERRPNHGEKGIQKDAS). N-linked (GlcNAc...) asparagine glycosylation occurs at asparagine 538. Residues 539–549 (KTEDEKHDKSQ) show a composition bias toward basic and acidic residues. Positions 550–563 (KQVTTPSQDQQSGQ) are enriched in polar residues.

The protein belongs to the semenogelin family. In terms of assembly, occurs in disulfide-linked complexes. Transglutaminase substrate. Post-translationally, rapidly cleaved after ejaculation by KLK3/PSA, resulting in liquefaction of the semen coagulum and the progressive release of motile spermatozoa.

Its subcellular location is the secreted. Predominant protein in semen. It participates in the formation of a gel matrix entrapping the accessory gland secretions and ejaculated spermatozoa. Fragments of semenogelin and/or fragments of the related proteins may contribute to the activation of progressive sperm movements as the gel-forming proteins are fragmented by KLK3/PSA. In Saguinus oedipus (Cotton-top tamarin), this protein is Semenogelin-1 (SEMG1).